We begin with the raw amino-acid sequence, 55 residues long: Male-specific sperm protein Mst84Dc (55 aa).

This sequence belongs to the MST(3)CGP family. As to expression, testis.

This chain is Male-specific sperm protein Mst84Dc (Mst84Dc), found in Drosophila melanogaster (Fruit fly).